The primary structure comprises 544 residues: Chromosomal replication initiator protein DnaA (544 aa).

Residues 1-71 are domain I, interacts with DnaA modulators; the sequence is MNDFWQHCSA…ADMARDFWHT (71 aa). The segment at 71–207 is domain II; it reads TPIDVQFVLD…GETDSMYERS (137 aa). The segment covering 90 to 105 has biased composition (low complexity); sequence AAAPAPASARPASAPG. Disordered stretches follow at residues 90-111 and 180-203; these read AAAP…GGSA and AAAR…TDSM. Residues 191-200 are compositionally biased toward polar residues; the sequence is SAGSNGNGET. The segment at 208-424 is domain III, AAA+ region; that stretch reads KLNPVLTFDN…GALRKILAYS (217 aa). ATP contacts are provided by glycine 252, glycine 254, lysine 255, and threonine 256. The segment at 425 to 544 is domain IV, binds dsDNA; the sequence is KFHGREITIE…LHVLEQTLKG (120 aa).

It belongs to the DnaA family. Oligomerizes as a right-handed, spiral filament on DNA at oriC.

It is found in the cytoplasm. In terms of biological role, plays an essential role in the initiation and regulation of chromosomal replication. ATP-DnaA binds to the origin of replication (oriC) to initiate formation of the DNA replication initiation complex once per cell cycle. Binds the DnaA box (a 9 base pair repeat at the origin) and separates the double-stranded (ds)DNA. Forms a right-handed helical filament on oriC DNA; dsDNA binds to the exterior of the filament while single-stranded (ss)DNA is stabiized in the filament's interior. The ATP-DnaA-oriC complex binds and stabilizes one strand of the AT-rich DNA unwinding element (DUE), permitting loading of DNA polymerase. After initiation quickly degrades to an ADP-DnaA complex that is not apt for DNA replication. Binds acidic phospholipids. In Paraburkholderia xenovorans (strain LB400), this protein is Chromosomal replication initiator protein DnaA.